Consider the following 386-residue polypeptide: S-adenosylmethionine synthase (386 aa).

H14 contributes to the ATP binding site. A Mg(2+)-binding site is contributed by D16. K(+) is bound at residue E42. E55 and Q98 together coordinate L-methionine. Residues 98-108 are flexible loop; it reads QSGDISQGVDG. ATP-binding positions include 162–164, 230–231, D239, 245–246, A262, and K266; these read DSK, RF, and RK. D239 contributes to the L-methionine binding site. K270 serves as a coordination point for L-methionine.

This sequence belongs to the AdoMet synthase family. As to quaternary structure, homotetramer; dimer of dimers. The cofactor is Mg(2+). Requires K(+) as cofactor.

The protein resides in the cytoplasm. It carries out the reaction L-methionine + ATP + H2O = S-adenosyl-L-methionine + phosphate + diphosphate. It functions in the pathway amino-acid biosynthesis; S-adenosyl-L-methionine biosynthesis; S-adenosyl-L-methionine from L-methionine: step 1/1. Catalyzes the formation of S-adenosylmethionine (AdoMet) from methionine and ATP. The overall synthetic reaction is composed of two sequential steps, AdoMet formation and the subsequent tripolyphosphate hydrolysis which occurs prior to release of AdoMet from the enzyme. This chain is S-adenosylmethionine synthase, found in Salinibacter ruber (strain DSM 13855 / M31).